Consider the following 259-residue polypeptide: Cytochrome c oxidase subunit 3 (259 aa).

Transmembrane regions (helical) follow at residues 13–33, 36–56, 80–100, 125–145, 160–180, 195–215, and 237–257; these read PWPL…ASWF, HGFL…IQWW, GMIL…WAFF, FSVP…VTWA, ALIL…GEYM, FFVA…FLAI, and AWYW…IYWW.

This sequence belongs to the cytochrome c oxidase subunit 3 family. Component of the cytochrome c oxidase (complex IV, CIV), a multisubunit enzyme composed of a catalytic core of 3 subunits and several supernumerary subunits. The complex exists as a monomer or a dimer and forms supercomplexes (SCs) in the inner mitochondrial membrane with ubiquinol-cytochrome c oxidoreductase (cytochrome b-c1 complex, complex III, CIII).

Its subcellular location is the mitochondrion inner membrane. It carries out the reaction 4 Fe(II)-[cytochrome c] + O2 + 8 H(+)(in) = 4 Fe(III)-[cytochrome c] + 2 H2O + 4 H(+)(out). Its function is as follows. Component of the cytochrome c oxidase, the last enzyme in the mitochondrial electron transport chain which drives oxidative phosphorylation. The respiratory chain contains 3 multisubunit complexes succinate dehydrogenase (complex II, CII), ubiquinol-cytochrome c oxidoreductase (cytochrome b-c1 complex, complex III, CIII) and cytochrome c oxidase (complex IV, CIV), that cooperate to transfer electrons derived from NADH and succinate to molecular oxygen, creating an electrochemical gradient over the inner membrane that drives transmembrane transport and the ATP synthase. Cytochrome c oxidase is the component of the respiratory chain that catalyzes the reduction of oxygen to water. Electrons originating from reduced cytochrome c in the intermembrane space (IMS) are transferred via the dinuclear copper A center (CU(A)) of subunit 2 and heme A of subunit 1 to the active site in subunit 1, a binuclear center (BNC) formed by heme A3 and copper B (CU(B)). The BNC reduces molecular oxygen to 2 water molecules using 4 electrons from cytochrome c in the IMS and 4 protons from the mitochondrial matrix. This chain is Cytochrome c oxidase subunit 3 (COIII), found in Lumbricus terrestris (Common earthworm).